The primary structure comprises 130 residues: Anti-adapter protein IraD (130 aa).

Belongs to the GpW/Gp25 family. IraD subfamily. As to quaternary structure, interacts with RssB.

It is found in the cytoplasm. Functionally, inhibits RpoS proteolysis by regulating RssB activity, thereby increasing the stability of the sigma stress factor RpoS during oxidative stress. Its effect on RpoS stability is due to its interaction with RssB, which probably blocks the interaction of RssB with RpoS, and the consequent delivery of the RssB-RpoS complex to the ClpXP protein degradation pathway. The sequence is that of Anti-adapter protein IraD from Shigella boydii serotype 4 (strain Sb227).